Here is a 433-residue protein sequence, read N- to C-terminus: MTAIVEPTWEERRTPEAAHEDDARSQYRKDYSRIIHSAALRRLQTKTQVLGLGDSDFYRTRLTHSLEVAQIGVGILLEIQRRFAGSNIEKYLPDERLLEAICLSHDYGHPPFGHGGERALNFAMREYGGFEGNAQTFRILSKLEKYSQNSGLNPTRRTLLGVLKYPTTYSNSMTNDFRRGTDIDKYPDAELKPPKCIYDCDLDVLDWVLKIFCSEDVTEFKKLDYKCKPLHKSLDCSLMETADDIAYTVHDLEDCIKLKLINREMWDAYIKSADYSEATRLEIEKWNQRIFSKEGNLVKQGISNMVYFFIHSVIQYEHEELSHPILKYGFKLGEEAARLRSAIQKIITNEVIKTHRVRVLESKGQRMIFSIFGELVRDPESFLPRETLDKYNKATGNLRMRVICDYVSGMTDEYATKTYQRFFTPKFGSVFDV.

An HD domain is found at 61-248; that stretch reads RLTHSLEVAQ…METADDIAYT (188 aa).

Belongs to the dGTPase family. Type 2 subfamily.

The protein is Deoxyguanosinetriphosphate triphosphohydrolase-like protein 2 of Deinococcus radiodurans (strain ATCC 13939 / DSM 20539 / JCM 16871 / CCUG 27074 / LMG 4051 / NBRC 15346 / NCIMB 9279 / VKM B-1422 / R1).